The following is a 360-amino-acid chain: Peptide chain release factor 1 (360 aa).

Q235 is modified (N5-methylglutamine). Residues 284–313 (AKRQQAEASTRRNLLGSGDRSDRNRTYNFP) are disordered.

The protein belongs to the prokaryotic/mitochondrial release factor family. Post-translationally, methylated by PrmC. Methylation increases the termination efficiency of RF1.

It localises to the cytoplasm. In terms of biological role, peptide chain release factor 1 directs the termination of translation in response to the peptide chain termination codons UAG and UAA. This Salmonella gallinarum (strain 287/91 / NCTC 13346) protein is Peptide chain release factor 1.